Here is a 695-residue protein sequence, read N- to C-terminus: D-(-)-3-hydroxybutyrate oligomer hydrolase (695 aa).

Residues 1 to 17 (MTTHGWGTRILLGAALA) form the signal peptide. Ser308 serves as the catalytic Charge relay system.

It belongs to the D-(-)-3-hydroxybutyrate oligomer hydrolase family.

The protein localises to the secreted. The enzyme catalyses (3R)-hydroxybutanoate dimer + H2O = 2 (R)-3-hydroxybutanoate + H(+). It functions in the pathway lipid metabolism; butanoate metabolism. Its function is as follows. Participates in the degradation of poly-3-hydroxybutyrate (PHB). It works downstream of poly(3-hydroxybutyrate) depolymerase, hydrolyzing D(-)-3-hydroxybutyrate oligomers of various length (3HB-oligomers) into 3HB-monomers. The protein is D-(-)-3-hydroxybutyrate oligomer hydrolase of Burkholderia ambifaria (strain ATCC BAA-244 / DSM 16087 / CCUG 44356 / LMG 19182 / AMMD) (Burkholderia cepacia (strain AMMD)).